A 575-amino-acid chain; its full sequence is Beta-amylase (575 aa).

The first 36 residues, 1–36 (MLHSQKRIWKKIGLCLLSFILGITVFTGSFGSKAEA), serve as a signal peptide directing secretion. A substrate-binding site is contributed by D77. E84 and D88 together coordinate Ca(2+). H117 and D125 together coordinate substrate. The cysteines at positions 119 and 127 are disulfide-linked. E171 provides a ligand contact to Ca(2+). The Proton donor role is filled by E199. The substrate site is built by K315, H320, and T358. The active-site Proton acceptor is E395. Residues 396–397 (NA) and R424 each bind substrate.

This sequence belongs to the glycosyl hydrolase 14 family. In terms of assembly, monomer. Ca(2+) serves as cofactor.

The catalysed reaction is Hydrolysis of (1-&gt;4)-alpha-D-glucosidic linkages in polysaccharides so as to remove successive maltose units from the non-reducing ends of the chains.. This is Beta-amylase from Niallia circulans (Bacillus circulans).